We begin with the raw amino-acid sequence, 466 residues long: Paraneoplastic antigen Ma3 homolog (466 aa).

Residues R379 to T408 form a disordered region. A compositionally biased stretch (basic residues) spans S384–G399. The CCHC-type zinc-finger motif lies at T415–N432. Positions Q441–K466 are disordered. Residues A445–H460 show a composition bias toward basic and acidic residues.

This sequence belongs to the PNMA family. As to expression, expressed in the cerebrum and cerebellum.

The protein localises to the nucleus. Its subcellular location is the nucleolus. This Mus musculus (Mouse) protein is Paraneoplastic antigen Ma3 homolog (Pnma3).